The sequence spans 323 residues: ATP synthase gamma chain (323 aa).

Residues 215 to 237 form a disordered region; the sequence is PAGGPAKEQEQGDEGGHGAPSAA. Residues 221–230 are compositionally biased toward basic and acidic residues; sequence KEQEQGDEGG.

It belongs to the ATPase gamma chain family. F-type ATPases have 2 components, CF(1) - the catalytic core - and CF(0) - the membrane proton channel. CF(1) has five subunits: alpha(3), beta(3), gamma(1), delta(1), epsilon(1). CF(0) has three main subunits: a, b and c.

The protein localises to the cell inner membrane. Produces ATP from ADP in the presence of a proton gradient across the membrane. The gamma chain is believed to be important in regulating ATPase activity and the flow of protons through the CF(0) complex. This Sorangium cellulosum (strain So ce56) (Polyangium cellulosum (strain So ce56)) protein is ATP synthase gamma chain.